The following is a 625-amino-acid chain: UvrABC system protein C (625 aa).

In terms of domain architecture, GIY-YIG spans 26–105 (LEPGVYFLRD…IKQHQPHFNT (80 aa)). A UVR domain is found at 215–250 (GELLEKLATKMLAASENLDFEQAATIRDQIRGLQAL).

This sequence belongs to the UvrC family. As to quaternary structure, interacts with UvrB in an incision complex.

The protein localises to the cytoplasm. Functionally, the UvrABC repair system catalyzes the recognition and processing of DNA lesions. UvrC both incises the 5' and 3' sides of the lesion. The N-terminal half is responsible for the 3' incision and the C-terminal half is responsible for the 5' incision. The polypeptide is UvrABC system protein C (Microcystis aeruginosa (strain NIES-843 / IAM M-2473)).